A 216-amino-acid polypeptide reads, in one-letter code: Ribosomal RNA large subunit methyltransferase E (216 aa).

The S-adenosyl-L-methionine site is built by G60, W62, D80, D96, and D121. K161 serves as the catalytic Proton acceptor.

It belongs to the class I-like SAM-binding methyltransferase superfamily. RNA methyltransferase RlmE family.

It is found in the cytoplasm. The enzyme catalyses uridine(2552) in 23S rRNA + S-adenosyl-L-methionine = 2'-O-methyluridine(2552) in 23S rRNA + S-adenosyl-L-homocysteine + H(+). In terms of biological role, specifically methylates the uridine in position 2552 of 23S rRNA at the 2'-O position of the ribose in the fully assembled 50S ribosomal subunit. This Pseudomonas syringae pv. syringae (strain B728a) protein is Ribosomal RNA large subunit methyltransferase E.